A 387-amino-acid polypeptide reads, in one-letter code: Type 2 DNA topoisomerase 6 subunit A (387 aa).

The Topo IIA-type catalytic domain occupies 12–160; it reads EARKKALAVF…MLILSKEKGK (149 aa). Catalysis depends on tyrosine 106, which acts as the O-(5'-phospho-DNA)-tyrosine intermediate. Mg(2+) is bound by residues glutamate 207 and aspartate 259.

It belongs to the TOP6A family. As to quaternary structure, homodimer. Heterotetramer of two Top6A and two Top6B chains. Requires Mg(2+) as cofactor.

It carries out the reaction ATP-dependent breakage, passage and rejoining of double-stranded DNA.. Relaxes both positive and negative superturns and exhibits a strong decatenase activity. The chain is Type 2 DNA topoisomerase 6 subunit A from Hyperthermus butylicus (strain DSM 5456 / JCM 9403 / PLM1-5).